The sequence spans 236 residues: 2-C-methyl-D-erythritol 4-phosphate cytidylyltransferase (236 aa).

The protein belongs to the IspD/TarI cytidylyltransferase family. IspD subfamily. Homodimer.

The catalysed reaction is 2-C-methyl-D-erythritol 4-phosphate + CTP + H(+) = 4-CDP-2-C-methyl-D-erythritol + diphosphate. The protein operates within isoprenoid biosynthesis; isopentenyl diphosphate biosynthesis via DXP pathway; isopentenyl diphosphate from 1-deoxy-D-xylulose 5-phosphate: step 2/6. Functionally, catalyzes the formation of 4-diphosphocytidyl-2-C-methyl-D-erythritol from CTP and 2-C-methyl-D-erythritol 4-phosphate (MEP). This Escherichia coli O7:K1 (strain IAI39 / ExPEC) protein is 2-C-methyl-D-erythritol 4-phosphate cytidylyltransferase.